The chain runs to 145 residues: D-aminoacyl-tRNA deacylase (145 aa).

Positions 137 to 138 (GP) match the Gly-cisPro motif, important for rejection of L-amino acids motif.

The protein belongs to the DTD family. Homodimer.

Its subcellular location is the cytoplasm. The catalysed reaction is glycyl-tRNA(Ala) + H2O = tRNA(Ala) + glycine + H(+). It carries out the reaction a D-aminoacyl-tRNA + H2O = a tRNA + a D-alpha-amino acid + H(+). Functionally, an aminoacyl-tRNA editing enzyme that deacylates mischarged D-aminoacyl-tRNAs. Also deacylates mischarged glycyl-tRNA(Ala), protecting cells against glycine mischarging by AlaRS. Acts via tRNA-based rather than protein-based catalysis; rejects L-amino acids rather than detecting D-amino acids in the active site. By recycling D-aminoacyl-tRNA to D-amino acids and free tRNA molecules, this enzyme counteracts the toxicity associated with the formation of D-aminoacyl-tRNA entities in vivo and helps enforce protein L-homochirality. In Pseudomonas entomophila (strain L48), this protein is D-aminoacyl-tRNA deacylase.